Here is a 1085-residue protein sequence, read N- to C-terminus: Voltage-dependent calcium channel subunit alpha-2/delta-3 (1085 aa).

The signal sequence occupies residues Met1–Ser33. Residues Glu34–Gly1062 lie on the Extracellular side of the membrane. A glycan (N-linked (GlcNAc...) asparagine) is linked at Asn166. The 183-residue stretch at Asp256–Leu438 folds into the VWFA domain. Residues Asp262, Ser264, and Ser266 each coordinate a divalent metal cation. The MIDAS-like motif motif lies at Asp262 to Ser266. N-linked (GlcNAc...) asparagine glycosylation is present at Asn309. Cys412 and Cys1049 form a disulfide bridge. The 92-residue stretch at Trp452–Arg543 folds into the Cache domain. N-linked (GlcNAc...) asparagine glycosylation is found at Asn547 and Asn626. Tyr918 carries the phosphotyrosine modification. The chain crosses the membrane as a helical span at residues Gly1063–Phe1083. The Cytoplasmic portion of the chain corresponds to Ser1084 to Arg1085.

The protein belongs to the calcium channel subunit alpha-2/delta family. Dimer formed of alpha-2-2 and delta-2 chains; disulfide-linked. Voltage-dependent calcium channels are multisubunit complexes, consisting of alpha-1 (CACNA1), alpha-2 (CACNA2D), beta (CACNB) and delta (CACNA2D) subunits in a 1:1:1:1 ratio. N-glycosylated. In terms of processing, may be proteolytically processed into subunits alpha-2-3 and delta-3 that are disulfide-linked. It is however unclear whether such cleavage really takes place in vivo and has a functional role. As to expression, in heart, it is expressed in atrium but not in ventricle.

The protein localises to the membrane. Its function is as follows. The alpha-2/delta subunit of voltage-dependent calcium channels regulates calcium current density and activation/inactivation kinetics of the calcium channel. Acts as a regulatory subunit for P/Q-type calcium channel (CACNA1A), N-type (CACNA1B), L-type (CACNA1C OR CACNA1D) but not T-type (CACNA1G). The chain is Voltage-dependent calcium channel subunit alpha-2/delta-3 (Cacna2d3) from Rattus norvegicus (Rat).